Reading from the N-terminus, the 244-residue chain is Protein crossbronx (244 aa).

The UBC core domain occupies 20–176 (QQEYKILAEY…VLENIKESKE (157 aa)).

The protein belongs to the ubiquitin-conjugating enzyme family. FTS subfamily.

The polypeptide is Protein crossbronx (cbx) (Drosophila persimilis (Fruit fly)).